Consider the following 605-residue polypeptide: Golgi-associated RAB2 interactor protein 3 (605 aa).

Disordered stretches follow at residues G234–T265 and Y407–K529. Residues H239–T265 are compositionally biased toward low complexity. Over residues K434–A457 the composition is skewed to basic residues. The Bipartite nuclear localization signal signature appears at R441–G458. Residues K463–H473 show a composition bias toward polar residues. Residues N475 to G484 are compositionally biased toward basic and acidic residues. The span at R489 to S500 shows a compositional bias: basic residues. The segment covering Q513–A526 has biased composition (polar residues). S592 carries the phosphoserine modification.

This sequence belongs to the GARIN family. As to quaternary structure, interacts (via N-terminus) with RAB2B (in GTP-bound form). Interacts with FRG1. As to expression, expressed in adult spermatocytes and spermatids (at protein level).

Its subcellular location is the golgi apparatus. The protein localises to the nucleus. It localises to the cajal body. May be involved in RNA biogenesis. The protein is Golgi-associated RAB2 interactor protein 3 of Homo sapiens (Human).